A 328-amino-acid chain; its full sequence is MKALVRVAVTGAAGQIGYSLLFRIAAGEMFGKDRPVILQMLELPDEKAQAALKGVMMELEDCAFPLLAGMVVTDNPDIAFKDADAALLVGSRPRGPGMERKDLLMENAKIFTAQGAALNKVARRDVKVLVVGNPANTNAYIAMKSAPDLNPKHFTAMLRLDHNRALSQLSTKLGKPVANIEKLIVWGNHSPTMYPDYRFATADGTPIIEAINDQAWNANSFIPTVSKRGAAIIEARGLSSAASAANAAIDHMRDWLLGSNGKWITMGVPSDGSYGIPEGMIFGFPVTTTNGEYSIVKDLPIDTFSKTYIDKTLAELEEERASIAHLLR.

11 to 17 (GAAGQIG) serves as a coordination point for NAD(+). Substrate is bound by residues Arg94 and Arg100. NAD(+) contacts are provided by residues Asn107, Gln114, and 131-133 (VGN). Asn133 and Arg164 together coordinate substrate. Residue His189 is the Proton acceptor of the active site.

This sequence belongs to the LDH/MDH superfamily. MDH type 2 family.

The catalysed reaction is (S)-malate + NAD(+) = oxaloacetate + NADH + H(+). Catalyzes the reversible oxidation of malate to oxaloacetate. This chain is Malate dehydrogenase, found in Xylella fastidiosa (strain M23).